The following is a 419-amino-acid chain: Gamma-glutamyl phosphate reductase (419 aa).

The protein belongs to the gamma-glutamyl phosphate reductase family.

It localises to the cytoplasm. It carries out the reaction L-glutamate 5-semialdehyde + phosphate + NADP(+) = L-glutamyl 5-phosphate + NADPH + H(+). It functions in the pathway amino-acid biosynthesis; L-proline biosynthesis; L-glutamate 5-semialdehyde from L-glutamate: step 2/2. Catalyzes the NADPH-dependent reduction of L-glutamate 5-phosphate into L-glutamate 5-semialdehyde and phosphate. The product spontaneously undergoes cyclization to form 1-pyrroline-5-carboxylate. This chain is Gamma-glutamyl phosphate reductase, found in Syntrophomonas wolfei subsp. wolfei (strain DSM 2245B / Goettingen).